A 412-amino-acid polypeptide reads, in one-letter code: CCA-adding enzyme (412 aa).

Positions 8 and 11 each coordinate ATP. The CTP site is built by G8 and R11. D21 and D23 together coordinate Mg(2+). Positions 91, 137, and 140 each coordinate ATP. Positions 91, 137, and 140 each coordinate CTP.

Belongs to the tRNA nucleotidyltransferase/poly(A) polymerase family. Bacterial CCA-adding enzyme type 2 subfamily. Mg(2+) serves as cofactor.

The enzyme catalyses a tRNA precursor + 2 CTP + ATP = a tRNA with a 3' CCA end + 3 diphosphate. The catalysed reaction is a tRNA with a 3' CCA end + 2 CTP + ATP = a tRNA with a 3' CCACCA end + 3 diphosphate. Catalyzes the addition and repair of the essential 3'-terminal CCA sequence in tRNAs without using a nucleic acid template. Adds these three nucleotides in the order of C, C, and A to the tRNA nucleotide-73, using CTP and ATP as substrates and producing inorganic pyrophosphate. tRNA 3'-terminal CCA addition is required both for tRNA processing and repair. Also involved in tRNA surveillance by mediating tandem CCA addition to generate a CCACCA at the 3' terminus of unstable tRNAs. While stable tRNAs receive only 3'-terminal CCA, unstable tRNAs are marked with CCACCA and rapidly degraded. The chain is CCA-adding enzyme from Buchnera aphidicola subsp. Schizaphis graminum (strain Sg).